Consider the following 122-residue polypeptide: Small ribosomal subunit protein uS13 (122 aa).

The interval 98–122 (VRGQRTHTNARTRKGPAKAIAGKKK) is disordered.

Belongs to the universal ribosomal protein uS13 family. In terms of assembly, part of the 30S ribosomal subunit. Forms a loose heterodimer with protein S19. Forms two bridges to the 50S subunit in the 70S ribosome.

Its function is as follows. Located at the top of the head of the 30S subunit, it contacts several helices of the 16S rRNA. In the 70S ribosome it contacts the 23S rRNA (bridge B1a) and protein L5 of the 50S subunit (bridge B1b), connecting the 2 subunits; these bridges are implicated in subunit movement. Contacts the tRNAs in the A and P-sites. The protein is Small ribosomal subunit protein uS13 of Jannaschia sp. (strain CCS1).